A 306-amino-acid chain; its full sequence is Curved DNA-binding protein (306 aa).

The region spanning aspartate 5–tryptophan 69 is the J domain.

It localises to the cytoplasm. It is found in the nucleoid. Functionally, DNA-binding protein that preferentially recognizes a curved DNA sequence. It is probably a functional analog of DnaJ; displays overlapping activities with DnaJ, but functions under different conditions, probably acting as a molecular chaperone in an adaptive response to environmental stresses other than heat shock. Lacks autonomous chaperone activity; binds native substrates and targets them for recognition by DnaK. Its activity is inhibited by the binding of CbpM. This is Curved DNA-binding protein from Escherichia coli (strain K12 / MC4100 / BW2952).